We begin with the raw amino-acid sequence, 344 residues long: Glyceraldehyde-3-phosphate dehydrogenase (344 aa).

Residues 11 to 12 and Gly110 contribute to the NAD(+) site; that span reads TI. Residue 139–141 participates in D-glyceraldehyde 3-phosphate binding; it reads SCN. The active-site Nucleophile is the Cys140. Position 169 (Arg169) interacts with NAD(+). 195-196 serves as a coordination point for D-glyceraldehyde 3-phosphate; the sequence is HG. Residue Gln302 coordinates NAD(+).

The protein belongs to the glyceraldehyde-3-phosphate dehydrogenase family. In terms of assembly, homotetramer.

Its subcellular location is the cytoplasm. The catalysed reaction is D-glyceraldehyde 3-phosphate + phosphate + NADP(+) = (2R)-3-phospho-glyceroyl phosphate + NADPH + H(+). It carries out the reaction D-glyceraldehyde 3-phosphate + phosphate + NAD(+) = (2R)-3-phospho-glyceroyl phosphate + NADH + H(+). It participates in carbohydrate degradation; glycolysis; pyruvate from D-glyceraldehyde 3-phosphate: step 1/5. The chain is Glyceraldehyde-3-phosphate dehydrogenase from Pyrobaculum islandicum (strain DSM 4184 / JCM 9189 / GEO3).